The chain runs to 227 residues: Esterase OVCA2 (227 aa).

Residues Ser119, Asp179, and His206 each act as charge relay system in the active site.

This sequence belongs to the LovG family.

The catalysed reaction is a carboxylic ester + H2O = an alcohol + a carboxylate + H(+). Its function is as follows. Exhibits ester hydrolase activity with a strong preference for long-chain alkyl ester substrates and high selectivity against a variety of short, branched, and substituted esters. Is able to hydrolyze ester bonds within a wide range of p-nitrophenyl derivatives (C2-C14) in vitro, with a strong preference toward substrates of &gt;8 carbons. The sequence is that of Esterase OVCA2 (OVCA2) from Bos taurus (Bovine).